The following is a 573-amino-acid chain: uncharacterized protein (573 aa).

Disordered stretches follow at residues 1-33 (MLQQGSSSRRSLHGNDFHTLTSPSRRDSLSIPR) and 60-101 (LVAN…SRYD). Residues 60–70 (LVANRSDNNGN) are compositionally biased toward polar residues. Residue asparagine 63 is glycosylated (N-linked (GlcNAc...) asparagine). Low complexity predominate over residues 84 to 95 (SSSTSSLPSTRN). Repeat copies occupy residues 102–103 (NM), 104–105 (NM), 106–107 (NM), 108–109 (NM), 110–111 (NM), 112–113 (NM), 114–115 (NM), 116–117 (NM), 118–119 (NM), and 120–121 (NM). The 10 X 2 AA tandem repeats of N-M stretch occupies residues 102-121 (NMNMNMNMNMNMNMNMNMNM). Asparagine 123 carries an N-linked (GlcNAc...) asparagine glycan. Disordered stretches follow at residues 150 to 174 (IPEKYSGSRYSLRSSPPTYSNPRVR), 192 to 271 (QFPN…IRSN), 286 to 317 (KSSNSADSVEENSKTKQKRKNPERVVPEPITS), and 357 to 379 (NNRIPVLPPPRSPNRPTLSDKRT). The segment covering 157–170 (SRYSLRSSPPTYSN) has biased composition (polar residues). Residues 208–225 (LPPSSTFPDSPSSSSLPL) are compositionally biased toward low complexity. The segment covering 226–252 (TQTGGPSSADNDSIATGTNNRSPQQTK) has biased composition (polar residues). An N-linked (GlcNAc...) asparagine glycan is attached at asparagine 236. 2 N-linked (GlcNAc...) asparagine glycosylation sites follow: asparagine 437 and asparagine 442. Composition is skewed to low complexity over residues 441–457 (INSSISSPAPSSSSSSS) and 466–483 (SISSSPTPAPSSGSSKSK). The tract at residues 441-483 (INSSISSPAPSSSSSSSLVSRGPMQSISSSPTPAPSSGSSKSK) is disordered. N-linked (GlcNAc...) asparagine glycosylation is found at asparagine 498, asparagine 535, and asparagine 541.

It to yeast AFR1. In terms of processing, N-glycosylated.

This is an uncharacterized protein from Saccharomyces cerevisiae (strain ATCC 204508 / S288c) (Baker's yeast).